Consider the following 591-residue polypeptide: L-fucose isomerase (591 aa).

Residues Glu-337 and Asp-361 each act as proton acceptor in the active site. Residues Glu-337, Asp-361, and His-528 each coordinate Mn(2+).

The protein belongs to the L-fucose isomerase family. Homohexamer. It depends on Mn(2+) as a cofactor.

It is found in the cytoplasm. The catalysed reaction is L-fucose = L-fuculose. The protein operates within carbohydrate degradation; L-fucose degradation; L-lactaldehyde and glycerone phosphate from L-fucose: step 1/3. Functionally, converts the aldose L-fucose into the corresponding ketose L-fuculose. This chain is L-fucose isomerase, found in Klebsiella pneumoniae subsp. pneumoniae (strain ATCC 700721 / MGH 78578).